The primary structure comprises 365 residues: Probable receptor-like protein kinase At2g47060 (365 aa).

A disordered region spans residues 18-48 (DYGGRHNQAKHFPPGNDARHHQASETAQKGP). One can recognise a Protein kinase domain in the interval 73-353 (FGSNSLIGEG…IVVKALQPLL (281 aa)). Residues 79–87 (IGEGSYGRV) and K101 each bind ATP. Y145 is modified (phosphotyrosine). D203 serves as the catalytic Proton acceptor. Phosphoserine is present on residues S207 and S237. Phosphothreonine occurs at positions 238 and 243. The residue at position 251 (Y251) is a Phosphotyrosine.

This sequence belongs to the protein kinase superfamily. Ser/Thr protein kinase family.

It catalyses the reaction L-seryl-[protein] + ATP = O-phospho-L-seryl-[protein] + ADP + H(+). The catalysed reaction is L-threonyl-[protein] + ATP = O-phospho-L-threonyl-[protein] + ADP + H(+). This chain is Probable receptor-like protein kinase At2g47060, found in Arabidopsis thaliana (Mouse-ear cress).